The sequence spans 423 residues: Salicylate 5-hydroxylase, large oxygenase component (423 aa).

The interval 1 to 20 (MSEPQRLKPVFPQDPKWPGE) is disordered. The region spanning 49-168 (WCYVGLEAEI…VAARGGAVFA (120 aa)) is the Rieske domain. Cysteine 91, histidine 93, cysteine 111, and histidine 114 together coordinate [2Fe-2S] cluster. Positions 224, 229, and 370 each coordinate Fe cation.

This sequence belongs to the bacterial ring-hydroxylating dioxygenase alpha subunit family. As to quaternary structure, the salicylate 5-hydroxylase (S5H) multicomponent enzyme system is composed of an electron transfer component and an oxygenase component. The electron transfer component is comprised of a ferredoxin reductase (NagAa) and a ferredoxin (NagAb), and the oxygenase component is formed by a large subunit (NagG) and a small subunit (NagH). Fe cation is required as a cofactor. [2Fe-2S] cluster serves as cofactor.

The catalysed reaction is salicylate + NADH + O2 + H(+) = 2,5-dihydroxybenzoate + NAD(+) + H2O. Its pathway is aromatic compound metabolism; naphthalene degradation. Oxygenase component of the salicylate 5-hydroxylase (S5H) multicomponent enzyme system which catalyzes the 5-hydroxylation of salicylate to gentisate. Active only on substrates with a ring-substituted carboxylate group with an adjacent hydroxyl group. Primarily active against salicylate and substituted salicylates, but not against 2-hydroxycinnamate, 3-hydroxycinnamate, 2-hydroxyphenylacetate, 3-hydroxyphenylacetate, 2-hydroxybenzophenone, 1-hydroxy-2-naphthoate, 4-methoxysalicylate or 2-hydroxyacetophenone. The polypeptide is Salicylate 5-hydroxylase, large oxygenase component (Ralstonia sp).